The sequence spans 320 residues: 1,5-anhydro-D-fructose reductase (320 aa).

The active-site Proton donor is the Y40. H102 lines the substrate pocket. Residues Q194 and 265–277 (IPGS…IKEN) each bind NADP(+).

Belongs to the aldo/keto reductase family. Monomer.

The protein localises to the cytoplasm. The catalysed reaction is 1,5-anhydro-D-glucitol + NADP(+) = 1,5-anhydro-D-fructose + NADPH + H(+). With respect to regulation, inhibited by p-chloromercuribenzoic acid and alkyliodines. Functionally, catalyzes the NADPH-dependent reduction of 1,5-anhydro-D-fructose (AF) to 1,5-anhydro-D-glucitol. This is 1,5-anhydro-D-fructose reductase (AKR1E2) from Macaca fascicularis (Crab-eating macaque).